The primary structure comprises 159 residues: Probable inactive acireductone dioxygenase 1 (159 aa).

This sequence belongs to the acireductone dioxygenase (ARD) family.

It is found in the cytoplasm. The protein resides in the nucleus. In terms of biological role, probable inactive acireductone dioxygenase. This is Probable inactive acireductone dioxygenase 1 from Caenorhabditis elegans.